The chain runs to 508 residues: Photosystem II CP47 reaction center protein (508 aa).

6 consecutive transmembrane segments (helical) span residues 21–36 (SVHI…WAGS), 101–115 (IMFS…IWHW), 140–156 (GIHL…FGAF), 203–218 (IAAG…FHLS), 237–252 (VLSS…AFIV), and 457–472 (TFAL…HGAR).

Belongs to the PsbB/PsbC family. PsbB subfamily. As to quaternary structure, PSII is composed of 1 copy each of membrane proteins PsbA, PsbB, PsbC, PsbD, PsbE, PsbF, PsbH, PsbI, PsbJ, PsbK, PsbL, PsbM, PsbT, PsbX, PsbY, PsbZ, Psb30/Ycf12, at least 3 peripheral proteins of the oxygen-evolving complex and a large number of cofactors. It forms dimeric complexes. Binds multiple chlorophylls. PSII binds additional chlorophylls, carotenoids and specific lipids. serves as cofactor.

The protein localises to the plastid. The protein resides in the chloroplast thylakoid membrane. Its function is as follows. One of the components of the core complex of photosystem II (PSII). It binds chlorophyll and helps catalyze the primary light-induced photochemical processes of PSII. PSII is a light-driven water:plastoquinone oxidoreductase, using light energy to abstract electrons from H(2)O, generating O(2) and a proton gradient subsequently used for ATP formation. The sequence is that of Photosystem II CP47 reaction center protein from Pinus koraiensis (Korean pine).